The sequence spans 997 residues: FIP1[III]-like protein (997 aa).

Disordered stretches follow at residues 250–272 (ITSN…LNSV), 289–475 (AGSF…ETEG), 534–553 (SRSS…KEED), and 880–900 (QGKV…TIEQ). A compositionally biased stretch (polar residues) spans 261–272 (SHSYGSKDLNSV). Basic and acidic residues-rich tracts occupy residues 309–323 (TPSD…KEES), 334–346 (SVER…DRIR), 367–379 (ESLK…DQRE), and 388–404 (RLAE…EDSG). The Nuclear localization signal signature appears at 397-404 (IKRGEDSG). A compositionally biased stretch (polar residues) spans 534 to 547 (SRSSFDLNQRNSRS). The stretch at 930–963 (EIIEEVKGVEIDNERIQESLKKMEKRRERFKGTK) forms a coiled coil.

Belongs to the FIP1 family. Component of the cleavage and polyadenylation specificity factor (CPSF) complex. Forms a complex with cleavage and polyadenylation specificity factor (CPSF) subunits CLPS5, FIPS5, PAPS4, PCFS1, CSTF64 and CPSF30.

It localises to the nucleus. Functionally, component of the cleavage and polyadenylation specificity factor (CPSF) complex that plays a key role in pre-mRNA 3'-end formation, recognizing the AAUAAA signal sequence and interacting with poly(A) polymerase and other factors to bring about cleavage and poly(A) addition. FIP1L1 contributes to poly(A) site recognition and stimulates poly(A) addition. Binds to U-rich RNA sequence elements surrounding the poly(A) site. May act to tether poly(A) polymerase to the CPSF complex. In Arabidopsis thaliana (Mouse-ear cress), this protein is FIP1[III]-like protein.